Here is a 152-residue protein sequence, read N- to C-terminus: MFRGASAINMDAKGRIAIPARYRDALRVEHAGTVIMTVDIDAACLLIYPLHEWEQIEAKLKLLSDTDPLERSFKRKLLGHAQDCELDSHGRIVIPPALRSFASLEKKTMLVGLLNKFELWEESAWQQQMDDGNALIQSQDLASNERLAHFSL.

2 consecutive SpoVT-AbrB domains span residues 5–52 and 81–124; these read ASAI…PLHE and AQDC…EESA.

The protein belongs to the MraZ family. As to quaternary structure, forms oligomers.

The protein localises to the cytoplasm. Its subcellular location is the nucleoid. The protein is Transcriptional regulator MraZ of Shewanella frigidimarina (strain NCIMB 400).